The sequence spans 151 residues: Globin CTT-X (151 aa).

The Globin domain maps to 6–150 (TLDAHEVEQV…AFSVIFEVLE (145 aa)). Heme b contacts are provided by His-64 and His-99.

Belongs to the globin family. Homodimer.

This is Globin CTT-X (CTT-10) from Chironomus thummi thummi (Midge).